The sequence spans 688 residues: Two-component response regulator ORR23 (688 aa).

Positions 25-140 (RVLAVDDDPV…ELRNIWQHVI (116 aa)) constitute a Response regulatory domain. D76 carries the post-translational modification 4-aspartylphosphate. The segment at 161–212 (PPNADSDHVHGHVTCGSPDQSGRPSKKRKEYCSEEEDEGEVNTQDIDDPSAP) is disordered. Acidic residues predominate over residues 193–208 (SEEEDEGEVNTQDIDD). The myb-like GARP DNA-binding region spans 211–270 (APKKPRVVWSVELHRKFVAAVNQLGIDKAVPKRILELMNVEKLTRENVASHLQKYRLYLK).

Belongs to the ARR family. Type-B subfamily. In terms of processing, two-component system major event consists of a His-to-Asp phosphorelay between a sensor histidine kinase (HK) and a response regulator (RR). In plants, the His-to-Asp phosphorelay involves an additional intermediate named Histidine-containing phosphotransfer protein (HPt). This multistep phosphorelay consists of a His-Asp-His-Asp sequential transfer of a phosphate group between first a His and an Asp of the HK protein, followed by the transfer to a conserved His of the HPt protein and finally the transfer to an Asp in the receiver domain of the RR protein.

The protein resides in the nucleus. Transcriptional activator that binds specific DNA sequence. Functions as a response regulator involved in His-to-Asp phosphorelay signal transduction system. Phosphorylation of the Asp residue in the receiver domain activates the ability of the protein to promote the transcription of target genes. May directly activate some type-A response regulators in response to cytokinins. The sequence is that of Two-component response regulator ORR23 from Oryza sativa subsp. japonica (Rice).